The primary structure comprises 181 residues: Deoxyuridine 5'-triphosphate nucleotidohydrolase (181 aa).

Substrate-binding positions include 96–98 (RSG), Asn109, 113–115 (TVD), and Lys123.

The protein belongs to the dUTPase family. It depends on Mg(2+) as a cofactor.

It catalyses the reaction dUTP + H2O = dUMP + diphosphate + H(+). Its pathway is pyrimidine metabolism; dUMP biosynthesis; dUMP from dCTP (dUTP route): step 2/2. Functionally, this enzyme is involved in nucleotide metabolism: it produces dUMP, the immediate precursor of thymidine nucleotides and it decreases the intracellular concentration of dUTP so that uracil cannot be incorporated into DNA. The sequence is that of Deoxyuridine 5'-triphosphate nucleotidohydrolase from Corynebacterium efficiens (strain DSM 44549 / YS-314 / AJ 12310 / JCM 11189 / NBRC 100395).